A 263-amino-acid polypeptide reads, in one-letter code: Acyl-[acyl-carrier-protein]--UDP-N-acetylglucosamine O-acyltransferase (263 aa).

The protein belongs to the transferase hexapeptide repeat family. LpxA subfamily. Homotrimer.

It localises to the cytoplasm. The catalysed reaction is a (3R)-hydroxyacyl-[ACP] + UDP-N-acetyl-alpha-D-glucosamine = a UDP-3-O-[(3R)-3-hydroxyacyl]-N-acetyl-alpha-D-glucosamine + holo-[ACP]. The protein operates within glycolipid biosynthesis; lipid IV(A) biosynthesis; lipid IV(A) from (3R)-3-hydroxytetradecanoyl-[acyl-carrier-protein] and UDP-N-acetyl-alpha-D-glucosamine: step 1/6. Functionally, involved in the biosynthesis of lipid A, a phosphorylated glycolipid that anchors the lipopolysaccharide to the outer membrane of the cell. This Campylobacter jejuni subsp. doylei (strain ATCC BAA-1458 / RM4099 / 269.97) protein is Acyl-[acyl-carrier-protein]--UDP-N-acetylglucosamine O-acyltransferase.